Reading from the N-terminus, the 206-residue chain is Phosphoribosyl-dephospho-CoA transferase (206 aa).

Catalysis depends on residues aspartate 131 and aspartate 133.

Belongs to the MdcG family.

It carries out the reaction apo-[malonate decarboxylase ACP] + 2'-(5''-triphospho-alpha-D-ribosyl)-3'-dephospho-CoA = holo-[malonate decarboxylase ACP] + diphosphate. In terms of biological role, transfers 2'-(5-triphosphoribosyl)-3'-dephosphocoenzyme-A to the apo-[acyl-carrier-protein] of the malonate decarboxylase to yield holo-[acyl-carrier-protein]. The sequence is that of Phosphoribosyl-dephospho-CoA transferase from Pseudomonas fluorescens (strain Pf0-1).